The following is a 176-amino-acid chain: Protein GrpE (176 aa).

It belongs to the GrpE family. As to quaternary structure, homodimer.

It localises to the cytoplasm. In terms of biological role, participates actively in the response to hyperosmotic and heat shock by preventing the aggregation of stress-denatured proteins, in association with DnaK and GrpE. It is the nucleotide exchange factor for DnaK and may function as a thermosensor. Unfolded proteins bind initially to DnaJ; upon interaction with the DnaJ-bound protein, DnaK hydrolyzes its bound ATP, resulting in the formation of a stable complex. GrpE releases ADP from DnaK; ATP binding to DnaK triggers the release of the substrate protein, thus completing the reaction cycle. Several rounds of ATP-dependent interactions between DnaJ, DnaK and GrpE are required for fully efficient folding. The polypeptide is Protein GrpE (Rickettsia bellii (strain OSU 85-389)).